Reading from the N-terminus, the 200-residue chain is Interferon lambda-1 (200 aa).

Positions 1 to 19 are cleaved as a signal peptide; that stretch reads MAAAWTVVLVTLVLGLAVA. N65 carries an N-linked (GlcNAc...) asparagine glycan. Cysteines 68 and 164 form a disulfide.

This sequence belongs to the lambda interferon family.

It localises to the secreted. Functionally, cytokine with antiviral, antitumour and immunomodulatory activities. Plays a critical role in the antiviral host defense, predominantly in the epithelial tissues. Acts as a ligand for the heterodimeric class II cytokine receptor composed of IL10RB and IFNLR1, and receptor engagement leads to the activation of the JAK/STAT signaling pathway resulting in the expression of IFN-stimulated genes (ISG), which mediate the antiviral state. Has a restricted receptor distribution and therefore restricted targets: is primarily active in epithelial cells and this cell type-selective action is because of the epithelial cell-specific expression of its receptor IFNLR1. Exerts an immunomodulatory effect by up-regulating MHC class I antigen expression. The polypeptide is Interferon lambda-1 (IFNL1) (Homo sapiens (Human)).